The sequence spans 117 residues: Translation initiation factor 1A (117 aa).

The 76-residue stretch at 17–92 (IRVPLPDRSK…ERGDIVYRYT (76 aa)) folds into the S1-like domain.

It belongs to the eIF-1A family.

Seems to be required for maximal rate of protein biosynthesis. Enhances ribosome dissociation into subunits and stabilizes the binding of the initiator Met-tRNA(I) to 40 S ribosomal subunits. This Thermococcus kodakarensis (strain ATCC BAA-918 / JCM 12380 / KOD1) (Pyrococcus kodakaraensis (strain KOD1)) protein is Translation initiation factor 1A.